The chain runs to 1118 residues: Collagenase ColG (1118 aa).

The signal sequence occupies residues 1 to 45 (MKKNILKILMDSYSKESKIQTVRRVTSVSLLAVYLTMNTSSLVLA). Positions 46–110 (KPIENTNDTS…KSKSTLRSAS (65 aa)) are excised as a propeptide. The tract at residues 111–786 (IANTNSEKYD…QYDVVFHGVL (676 aa)) is S1 metalloprotease domain, degrades both FALGPA (furylacryloyl-Leu-Gly-Pro-Ala) and type I collagen. The activator domain required for full activity on collagen stretch occupies residues 119–388 (YDFEYLNGLS…AMERITWDYD (270 aa)). Residues 389-670 (GIGSNGKKVD…IQELADKYQG (282 aa)) form a catalytic subdomain region. The interval 396-1118 (KVDHDKFLDD…SGNYELRVNK (723 aa)) is degrades soluble FALGPA peptide (furylacryloyl-Leu-Gly-Pro-Ala) but not type I collagen. Glu-498 serves as a coordination point for Ca(2+). His-523 lines the Zn(2+) pocket. Glu-524 is a catalytic residue. Residue His-527 participates in Zn(2+) binding. The Ca(2+) site is built by Ala-531, Val-535, and Gly-537. Zn(2+) is bound at residue Glu-555. The segment at 679–790 (DYLKDHGYKK…VFHGVLTDNA (112 aa)) is helper subdomain. Residues 787–882 (TDNADISNNK…SFTIEIKNED (96 aa)) are S2 domain. Residues Asn-795, Lys-796, Asp-823, Asp-825, Asp-864, Glu-890, Glu-892, Asn-894, Asp-913, Asp-918, Ala-920, Asp-921, Glu-1009, Glu-1011, Asn-1013, Asp-1014, Ser-1032, Asp-1037, Arg-1039, and Asp-1040 each contribute to the Ca(2+) site. In terms of domain architecture, PKD spans 797–885 (APIAKVTGPS…IEIKNEDTTT (89 aa)). The S3a collagen-binding domain stretch occupies residues 886-1003 (PITKEMEPND…SYSLNIKGLG (118 aa)). The tract at residues 1008 to 1118 (KEKENNDSSD…SGNYELRVNK (111 aa)) is S3b collagen-binding domain. Residues 1102–1106 (LVYKY) are collagen-binding.

The protein belongs to the peptidase M9B family. Collagenase subfamily. The cofactor is Ca(2+). Requires Zn(2+) as cofactor. Upon purification gives 67 kDa, 78 kDa, 82 kDa and 116 kDa (full-length) proteins all of which have the same N-terminus; only the longest form digests insoluble collagen. At least 2 in vivo isolated forms (C1b and C1c) are missing the second collagen-binding domain, ending on Lys-1006 and Lys-1018 respectively.

Its subcellular location is the secreted. The catalysed reaction is Digestion of native collagen in the triple helical region at Xaa-|-Gly bonds. With synthetic peptides, a preference is shown for Gly at P3 and P1', Pro and Ala at P2 and P2', and hydroxyproline, Ala or Arg at P3'.. With respect to regulation, inhibited by 1-10-phenanthroline. Inhibited by peptidomimetic isoamyl-phosphonyl-Gly-Pro-Ala, which binds to Zn(2+). Inhibited by broad-spectrum zinc metalloprotease inhibitor batimastat. N-aryl mercaptoacetamide-based inhibitors have been isolated that act on clostridial collagenases with submicromolar affinity while having negligibile activity on human collagenases. Its function is as follows. Clostridial collagenases are among the most efficient degraders of eukaryotic collagen known; saprophytes use collagen as a carbon source while pathogens additionally digest collagen to aid in host colonization. Has both tripeptidylcarboxypeptidase on Gly-X-Y and endopeptidase activities; the endopeptidase cuts within the triple helix region of collagen while tripeptidylcarboxypeptidase successively digests the exposed ends, thus clostridial collagenases can digest large sections of collagen. Active on soluble type I collagen, insoluble collagen, azocoll, soluble PZ-peptide (all collagenase substrates) and gelatin. The full-length protein has collagenase activity, while the in vivo derived C-terminally truncated shorter versions only act on gelatin. In vitro digestion of soluble calf skin collagen fibrils requires both ColG and ColH; ColG forms missing the second collagen-binding domain are also synergistic with ColH, although their overall efficiency is decreased. The activator domain (residues 119-388) and catalytic subdomain (389-670) open and close around substrate using a Gly-rich hinge (387-397), allowing digestion when the protein is closed. Binding of collagen requires Ca(2+) and is inhibited by EGTA; the collagen-binding domain (CBD, S3a plus S3b) specifically recognizes the triple-helical conformation made by 3 collagen protein chains in the triple-helical region. Isolated CBD (S3a plus S3b) binds collagen fibrils and sheets of many tissues. This is Collagenase ColG from Hathewaya histolytica (Clostridium histolyticum).